The following is a 61-amino-acid chain: Small ribosomal subunit protein uS14 (61 aa).

Cys24, Cys27, Cys40, and Cys43 together coordinate Zn(2+).

This sequence belongs to the universal ribosomal protein uS14 family. Zinc-binding uS14 subfamily. As to quaternary structure, part of the 30S ribosomal subunit. Contacts proteins S3 and S10. It depends on Zn(2+) as a cofactor.

Functionally, binds 16S rRNA, required for the assembly of 30S particles and may also be responsible for determining the conformation of the 16S rRNA at the A site. The polypeptide is Small ribosomal subunit protein uS14 (Clostridium acetobutylicum (strain ATCC 824 / DSM 792 / JCM 1419 / IAM 19013 / LMG 5710 / NBRC 13948 / NRRL B-527 / VKM B-1787 / 2291 / W)).